We begin with the raw amino-acid sequence, 218 residues long: Response regulator UvrY (218 aa).

Positions 3–119 (NVLLVDDHEL…EVVSAIRSVY (117 aa)) constitute a Response regulatory domain. Asp54 is subject to 4-aspartylphosphate. The 66-residue stretch at 143-208 (TESPFASLSE…ELTHLAIRHG (66 aa)) folds into the HTH luxR-type domain. A DNA-binding region (H-T-H motif) is located at residues 167–186 (VNEISEQLNLSPKTVNSYRY).

In terms of processing, phosphorylated and activated by BarA.

The protein resides in the cytoplasm. In terms of biological role, member of the two-component regulatory system UvrY/BarA involved in the regulation of carbon metabolism via the CsrA/CsrB regulatory system. UvrY activates the transcription of the untranslated csrB RNA and of barA, in an autoregulatory loop. Mediates the effects of CsrA on csrB RNA by BarA-dependent and BarA-independent mechanisms. This Escherichia coli (strain K12) protein is Response regulator UvrY (uvrY).